The sequence spans 606 residues: Glutamine--fructose-6-phosphate aminotransferase [isomerizing] (606 aa).

Catalysis depends on cysteine 2, which acts as the Nucleophile; for GATase activity. A Glutamine amidotransferase type-2 domain is found at 2–217; it reads CGIIGIVGKE…EGDYVALDHD (216 aa). SIS domains lie at 280–421 and 454–596; these read VPGD…ARGT and IAAD…VDQP. Lysine 601 acts as the For Fru-6P isomerization activity in catalysis.

In terms of assembly, homodimer.

The protein resides in the cytoplasm. It catalyses the reaction D-fructose 6-phosphate + L-glutamine = D-glucosamine 6-phosphate + L-glutamate. In terms of biological role, catalyzes the first step in hexosamine metabolism, converting fructose-6P into glucosamine-6P using glutamine as a nitrogen source. This Caulobacter vibrioides (strain ATCC 19089 / CIP 103742 / CB 15) (Caulobacter crescentus) protein is Glutamine--fructose-6-phosphate aminotransferase [isomerizing].